The primary structure comprises 343 residues: tRNA N6-adenosine threonylcarbamoyltransferase (343 aa).

Residues His-111 and His-115 each contribute to the Fe cation site. Residues 133–137 (AVSGG), Asp-166, Gly-179, Asp-183, and Asn-273 contribute to the substrate site. Asp-301 lines the Fe cation pocket.

This sequence belongs to the KAE1 / TsaD family. Requires Fe(2+) as cofactor.

It is found in the cytoplasm. The catalysed reaction is L-threonylcarbamoyladenylate + adenosine(37) in tRNA = N(6)-L-threonylcarbamoyladenosine(37) in tRNA + AMP + H(+). Its function is as follows. Required for the formation of a threonylcarbamoyl group on adenosine at position 37 (t(6)A37) in tRNAs that read codons beginning with adenine. Is involved in the transfer of the threonylcarbamoyl moiety of threonylcarbamoyl-AMP (TC-AMP) to the N6 group of A37, together with TsaE and TsaB. TsaD likely plays a direct catalytic role in this reaction. In Geotalea uraniireducens (strain Rf4) (Geobacter uraniireducens), this protein is tRNA N6-adenosine threonylcarbamoyltransferase.